The sequence spans 668 residues: UvrABC system protein B (668 aa).

One can recognise a Helicase ATP-binding domain in the interval Gln-31–Arg-416. Gly-44–Thr-51 contacts ATP. A Beta-hairpin motif is present at residues Tyr-97–Ile-120. The Helicase C-terminal domain maps to Gln-433 to Ile-596. The 36-residue stretch at Glu-621–Gln-656 folds into the UVR domain.

Belongs to the UvrB family. As to quaternary structure, forms a heterotetramer with UvrA during the search for lesions. Interacts with UvrC in an incision complex.

Its subcellular location is the cytoplasm. The UvrABC repair system catalyzes the recognition and processing of DNA lesions. A damage recognition complex composed of 2 UvrA and 2 UvrB subunits scans DNA for abnormalities. Upon binding of the UvrA(2)B(2) complex to a putative damaged site, the DNA wraps around one UvrB monomer. DNA wrap is dependent on ATP binding by UvrB and probably causes local melting of the DNA helix, facilitating insertion of UvrB beta-hairpin between the DNA strands. Then UvrB probes one DNA strand for the presence of a lesion. If a lesion is found the UvrA subunits dissociate and the UvrB-DNA preincision complex is formed. This complex is subsequently bound by UvrC and the second UvrB is released. If no lesion is found, the DNA wraps around the other UvrB subunit that will check the other stand for damage. The protein is UvrABC system protein B of Chlamydia trachomatis serovar D (strain ATCC VR-885 / DSM 19411 / UW-3/Cx).